The primary structure comprises 134 residues: Large ribosomal subunit protein bL12 (134 aa).

It belongs to the bacterial ribosomal protein bL12 family. In terms of assembly, homodimer. Part of the ribosomal stalk of the 50S ribosomal subunit. Forms a multimeric L10(L12)X complex, where L10 forms an elongated spine to which 2 to 4 L12 dimers bind in a sequential fashion. Binds GTP-bound translation factors.

Its function is as follows. Forms part of the ribosomal stalk which helps the ribosome interact with GTP-bound translation factors. Is thus essential for accurate translation. This Anaplasma phagocytophilum (strain HZ) protein is Large ribosomal subunit protein bL12.